We begin with the raw amino-acid sequence, 339 residues long: DNA-directed RNA polymerase subunit alpha (339 aa).

Positions 1-233 (MVREEVAGST…DLFLPFLHAE (233 aa)) are alpha N-terminal domain (alpha-NTD). The tract at residues 264–339 (KKGIPLNCIF…IDLLKNKLSF (76 aa)) is alpha C-terminal domain (alpha-CTD).

It belongs to the RNA polymerase alpha chain family. In plastids the minimal PEP RNA polymerase catalytic core is composed of four subunits: alpha, beta, beta', and beta''. When a (nuclear-encoded) sigma factor is associated with the core the holoenzyme is formed, which can initiate transcription.

The protein resides in the plastid. The protein localises to the chloroplast. It carries out the reaction RNA(n) + a ribonucleoside 5'-triphosphate = RNA(n+1) + diphosphate. DNA-dependent RNA polymerase catalyzes the transcription of DNA into RNA using the four ribonucleoside triphosphates as substrates. The sequence is that of DNA-directed RNA polymerase subunit alpha from Psathyrostachys fragilis (Russian wild rye).